The sequence spans 428 residues: Enolase (428 aa).

Gln164 provides a ligand contact to (2R)-2-phosphoglycerate. Catalysis depends on Glu208, which acts as the Proton donor. The Mg(2+) site is built by Asp245, Glu286, and Asp313. Lys338, Arg367, Ser368, and Lys389 together coordinate (2R)-2-phosphoglycerate. The active-site Proton acceptor is Lys338.

This sequence belongs to the enolase family. The cofactor is Mg(2+).

The protein localises to the cytoplasm. It is found in the secreted. It localises to the cell surface. The catalysed reaction is (2R)-2-phosphoglycerate = phosphoenolpyruvate + H2O. Its pathway is carbohydrate degradation; glycolysis; pyruvate from D-glyceraldehyde 3-phosphate: step 4/5. In terms of biological role, catalyzes the reversible conversion of 2-phosphoglycerate (2-PG) into phosphoenolpyruvate (PEP). It is essential for the degradation of carbohydrates via glycolysis. This Pyrococcus horikoshii (strain ATCC 700860 / DSM 12428 / JCM 9974 / NBRC 100139 / OT-3) protein is Enolase.